A 343-amino-acid chain; its full sequence is Cytosolic Fe-S cluster assembly factor CFD1 (343 aa).

15-22 (GKGGVGKS) contributes to the ATP binding site. 2 stretches are compositionally biased toward polar residues: residues 80–91 (PSSDGLNGSQRA) and 99–110 (ESSSSTVETAPQ). A disordered region spans residues 80–110 (PSSDGLNGSQRANKPDDSNESSSSTVETAPQ). C241 and C244 together coordinate [4Fe-4S] cluster.

Belongs to the Mrp/NBP35 ATP-binding proteins family. NUBP2/CFD1 subfamily. Heterotetramer of 2 NBP35 and 2 CFD1 chains. Requires [4Fe-4S] cluster as cofactor.

Its subcellular location is the cytoplasm. In terms of biological role, component of the cytosolic iron-sulfur (Fe/S) protein assembly (CIA) machinery. Required for maturation of extramitochondrial Fe-S proteins. The NBP35-CFD1 heterotetramer forms a Fe-S scaffold complex, mediating the de novo assembly of an Fe-S cluster and its transfer to target apoproteins. This chain is Cytosolic Fe-S cluster assembly factor CFD1, found in Coccidioides immitis (strain RS) (Valley fever fungus).